Here is a 181-residue protein sequence, read N- to C-terminus: Shikimate kinase 2 (181 aa).

12–17 provides a ligand contact to ATP; it reads GCGKTT. Mg(2+) contacts are provided by Thr-16 and Asp-32. Positions 34, 58, and 79 each coordinate substrate. The interval 112 to 126 is LID domain; that stretch reads EAEPEADLRPTLTGK. Arg-120 is an ATP binding site. Arg-139 serves as a coordination point for substrate.

It belongs to the shikimate kinase family. AroL subfamily. In terms of assembly, monomer. Requires Mg(2+) as cofactor.

The protein localises to the cytoplasm. It carries out the reaction shikimate + ATP = 3-phosphoshikimate + ADP + H(+). It participates in metabolic intermediate biosynthesis; chorismate biosynthesis; chorismate from D-erythrose 4-phosphate and phosphoenolpyruvate: step 5/7. Its function is as follows. Catalyzes the specific phosphorylation of the 3-hydroxyl group of shikimic acid using ATP as a cosubstrate. This chain is Shikimate kinase 2, found in Salmonella dublin (strain CT_02021853).